The primary structure comprises 104 residues: Guanidinium exporter (104 aa).

Residues 1–3 are Cytoplasmic-facing; that stretch reads MSW. A helical transmembrane segment spans residues 4-26; that stretch reads IILFVAGLLEIVWAVGLKYTHGF. Over 27–32 the chain is Periplasmic; it reads TRLTPS. The chain crosses the membrane as a helical span at residues 33-50; that stretch reads IITISAMIVSMGMLSYAM. Residues 51-54 lie on the Cytoplasmic side of the membrane; that stretch reads KGLP. The helical transmembrane segment at 55–77 threads the bilayer; that stretch reads AGTAYAIWTGIGAVGTAIFGIIV. At 78 to 83 the chain is on the periplasmic side; it reads FGESAN. Residues 84–103 traverse the membrane as a helical segment; sequence IYRLLSLAMIVFGIIGLKLA. S104 is a topological domain (cytoplasmic).

This sequence belongs to the drug/metabolite transporter (DMT) superfamily. Small multidrug resistance (SMR) (TC 2.A.7.1) family. Gdx/SugE subfamily.

It localises to the cell inner membrane. In terms of biological role, guanidinium ion exporter. Couples guanidinium export to the proton motive force, exchanging one guanidinium ion for two protons. The polypeptide is Guanidinium exporter (Proteus vulgaris).